We begin with the raw amino-acid sequence, 906 residues long: MSHQVKGLKEEARGGVKGRVKSGSPHTGDRLGRRSSSKRALKAEGTPGRRGAQRSQKERAGGSPSPGSPRRKQTGRRRHREELGEQERGEAERTCEGRRKRDERASFQERTAAPKREKEIPRREEKSKRQKKPRSSSLASSASGGESLSEEELAQILEQVEEKKKLIATMRSKPWPMAKKLTELREAQEFVEKYEGALGKGKGKQLYAYKMLMAKKWVKFKRDFDNFKTQCIPWEMKIKDIESHFGSSVASYFIFLRWMYGVNLVLFGLIFGLVIIPEVLMGMPYGSIPRKTVPRAEEEKAMDFSVLWDFEGYIKYSALFYGYYNNQRTIGWLRYRLPMAYFMVGVSVFGYSLIIVIRSMASNTQGSTGEGESDNFTFSFKMFTSWDYLIGNSETADNKYASITTSFKESIVDEQESNKEENIHLTRFLRVLANFLIICCLCGSGYLIYFVVKRSQQFSKMQNVSWYERNEVEIVMSLLGMFCPPLFETIAALENYHPRTGLKWQLGRIFALFLGNLYTFLLALMDDVHLKLANEETIKNITHWTLFNYYNSSGWNESVPRPPLHPADVPRGSCWETAVGIEFMRLTVSDMLVTYITILLGDFLRACFVRFMNYCWCWDLEAGFPSYAEFDISGNVLGLIFNQGMIWMGSFYAPGLVGINVLRLLTSMYFQCWAVMSSNVPHERVFKASRSNNFYMGLLLLVLFLSLLPVAYTIMSLPPSFDCGPFSGKNRMYDVLQETIENDFPTFLGKIFAFLANPGLIIPAILLMFLAIYYLNSVSKSLSRANAQLRKKIQVLREVEKSHKSVKGKATARDSEDTPKSSSKNATQLQLTKEETTPPSASQSQAMDKKAQGPGTSNSASRTTLPASGHLPISRPPGIGPDSGHAPSQTHPWRSASGKSAQRPPH.

The disordered stretch occupies residues 1–150 (MSHQVKGLKE…SASGGESLSE (150 aa)). Residues 1-263 (MSHQVKGLKE…IFLRWMYGVN (263 aa)) are Cytoplasmic-facing. Residues 69–79 (PRRKQTGRRRH) are compositionally biased toward basic residues. Residues 80–127 (REELGEQERGEAERTCEGRRKRDERASFQERTAAPKREKEIPRREEKS) are compositionally biased toward basic and acidic residues. A compositionally biased stretch (low complexity) spans 135–147 (SSSLASSASGGES). Residues 264-284 (LVLFGLIFGLVIIPEVLMGMP) traverse the membrane as a helical segment. Over 285-336 (YGSIPRKTVPRAEEEKAMDFSVLWDFEGYIKYSALFYGYYNNQRTIGWLRYR) the chain is Extracellular. Residues 337–357 (LPMAYFMVGVSVFGYSLIIVI) traverse the membrane as a helical segment. Residues 358–431 (RSMASNTQGS…NIHLTRFLRV (74 aa)) lie on the Cytoplasmic side of the membrane. Residues 432-452 (LANFLIICCLCGSGYLIYFVV) traverse the membrane as a helical segment. The Extracellular segment spans residues 453–508 (KRSQQFSKMQNVSWYERNEVEIVMSLLGMFCPPLFETIAALENYHPRTGLKWQLGR). The helical transmembrane segment at 509-529 (IFALFLGNLYTFLLALMDDVH) threads the bilayer. Topologically, residues 530 to 693 (LKLANEETIK…RVFKASRSNN (164 aa)) are cytoplasmic. A helical membrane pass occupies residues 694–714 (FYMGLLLLVLFLSLLPVAYTI). At 715–750 (MSLPPSFDCGPFSGKNRMYDVLQETIENDFPTFLGK) the chain is on the extracellular side. Residues 751–771 (IFAFLANPGLIIPAILLMFLA) form a helical membrane-spanning segment. Topologically, residues 772-906 (IYYLNSVSKS…SGKSAQRPPH (135 aa)) are cytoplasmic. Residues 800 to 906 (EKSHKSVKGK…SGKSAQRPPH (107 aa)) form a disordered region. Composition is skewed to polar residues over residues 820–846 (KSSS…QSQA), 854–866 (PGTS…TTLP), and 886–900 (APSQ…SGKS).

The protein belongs to the TMC family. Forms the MET channel composed of TMC dimer (TMC1 or TMC2), TMIE, TOMT, CIB (CIB2 or CIB3), LHFPL5 and PDH15. The interaction of TMC1 and TMC2 with TOMT is required for the transportation of TMC1/2 into the stereocilia of hair cells. Interacts (via N-terminus) with both isoforms CD1 and CD3 of PCDH15. Can form a heterodimer with TMC1, TMC5 or TMC7. As to expression, detected in fetal cochlea.

Its subcellular location is the cell membrane. It catalyses the reaction Ca(2+)(in) = Ca(2+)(out). In terms of biological role, pore-forming subunit of the mechanotransducer (MET) non-selective cation channel complex located at the tips of stereocilia of cochlear hair cells and that mediates sensory transduction in the auditory system. The MET complex is composed of two dimeric pore-forming ion-conducting transmembrane TMC (TMC1 or TMC2) subunits, and aided by several auxiliary proteins including LHFPL5, TMIE, CIB2/3 and TOMT, and the tip-link PCDH15. MET channel is activated by tension in the tip-link extending from the side wall of one stereocilium to the tip of the adjacent shorter stereocilium, where the channel is located. TMC2 MET channel is highly permeable to calcium and likely transports monovalent cations. Also involved in vestibular hair cell transduction current of the mammalian inner ear. The polypeptide is Transmembrane channel-like protein 2 (Homo sapiens (Human)).